We begin with the raw amino-acid sequence, 403 residues long: Chalcone synthase 2 (403 aa).

Residue 59 to 66 (RFQRMCES) coordinates CoA. Catalysis depends on cysteine 168, which acts as the Acyl-thioester intermediate. Residue 220–221 (GD) participates in substrate binding. Residue alanine 313 coordinates CoA.

This sequence belongs to the thiolase-like superfamily. Chalcone/stilbene synthases family. As to quaternary structure, homodimer.

The catalysed reaction is (E)-4-coumaroyl-CoA + 3 malonyl-CoA + 3 H(+) = 2',4,4',6'-tetrahydroxychalcone + 3 CO2 + 4 CoA. It participates in secondary metabolite biosynthesis; flavonoid biosynthesis. Its function is as follows. The primary product of this enzyme is 4,2',4',6'-tetrahydroxychalcone (also termed naringenin-chalcone or chalcone) which can under specific conditions spontaneously isomerize into naringenin. This Oryza sativa subsp. japonica (Rice) protein is Chalcone synthase 2 (CHS2).